Reading from the N-terminus, the 1209-residue chain is Major DNA-binding protein (1209 aa).

The segment at 290–312 (NAGKGSGRAQRQGDGSGSKNSAS) is disordered. The segment at 503 to 516 (CGLCNQATRPACAH) is a zinc-finger region. The Required for filament formation signature appears at 849–850 (FW). Positions 1182 to 1209 (QKRSLPDDILFDMGAPPEKKSGLTFDML) are required for nuclear localization.

It belongs to the herpesviridae major DNA-binding protein family. As to quaternary structure, homooligomers. Forms double-helical filaments necessary for the formation of replication compartments within the host nucleus. Interacts with the origin-binding protein. Interacts with the helicase primase complex; this interaction stimulates primer synthesis activity of the helicase-primase complex. Interacts with the DNA polymerase. Interacts with the alkaline exonuclease; this interaction increases its nuclease processivity.

Its subcellular location is the host nucleus. Its function is as follows. Plays several crucial roles in viral infection. Participates in the opening of the viral DNA origin to initiate replication by interacting with the origin-binding protein. May disrupt loops, hairpins and other secondary structures present on ssDNA to reduce and eliminate pausing of viral DNA polymerase at specific sites during elongation. Promotes viral DNA recombination by performing strand-transfer, characterized by the ability to transfer a DNA strand from a linear duplex to a complementary single-stranded DNA circle. Can also catalyze the renaturation of complementary single strands. Additionally, reorganizes the host cell nucleus, leading to the formation of prereplicative sites and replication compartments. This process is driven by the protein which can form double-helical filaments in the absence of DNA. This Equine herpesvirus 1 (strain Ab4p) (EHV-1) protein is Major DNA-binding protein.